We begin with the raw amino-acid sequence, 345 residues long: Phenylalanine--tRNA ligase alpha subunit (345 aa).

Glu253 provides a ligand contact to Mg(2+).

It belongs to the class-II aminoacyl-tRNA synthetase family. Phe-tRNA synthetase alpha subunit type 1 subfamily. In terms of assembly, tetramer of two alpha and two beta subunits. The cofactor is Mg(2+).

The protein localises to the cytoplasm. The enzyme catalyses tRNA(Phe) + L-phenylalanine + ATP = L-phenylalanyl-tRNA(Phe) + AMP + diphosphate + H(+). This chain is Phenylalanine--tRNA ligase alpha subunit, found in Nitratidesulfovibrio vulgaris (strain DP4) (Desulfovibrio vulgaris).